The sequence spans 211 residues: Uridine kinase (211 aa).

13 to 20 is an ATP binding site; sequence GGTASGKT.

This sequence belongs to the uridine kinase family.

The protein resides in the cytoplasm. It carries out the reaction uridine + ATP = UMP + ADP + H(+). The catalysed reaction is cytidine + ATP = CMP + ADP + H(+). It participates in pyrimidine metabolism; CTP biosynthesis via salvage pathway; CTP from cytidine: step 1/3. Its pathway is pyrimidine metabolism; UMP biosynthesis via salvage pathway; UMP from uridine: step 1/1. The polypeptide is Uridine kinase (Thermus thermophilus (strain ATCC BAA-163 / DSM 7039 / HB27)).